We begin with the raw amino-acid sequence, 407 residues long: uncharacterized protein (407 aa).

2 coiled-coil regions span residues 96–130 (TDSI…FKNE) and 287–345 (MKCY…AKTS). The segment covering 302 to 317 (EKRKDNLQKQNEEAAK) has biased composition (basic and acidic residues). Residues 302–394 (EKRKDNLQKQ…NMDPAINESD (93 aa)) are disordered. Basic residues predominate over residues 318–331 (ITKRKNRQEKRREK). Over residues 344 to 370 (TSVSSIPDTSSTTTSTNSTPTNTKSNS) the composition is skewed to low complexity.

This is an uncharacterized protein from Acanthamoeba polyphaga (Amoeba).